We begin with the raw amino-acid sequence, 275 residues long: Type III pantothenate kinase (275 aa).

An ATP-binding site is contributed by 6–13 (DAGNTNIV). 108–111 (GADR) lines the substrate pocket. The Proton acceptor role is filled by Asp110. Residue Asp130 participates in K(+) binding. Thr133 lines the ATP pocket. Thr187 is a binding site for substrate.

Belongs to the type III pantothenate kinase family. As to quaternary structure, homodimer. Requires NH4(+) as cofactor. K(+) serves as cofactor.

The protein resides in the cytoplasm. It carries out the reaction (R)-pantothenate + ATP = (R)-4'-phosphopantothenate + ADP + H(+). Its pathway is cofactor biosynthesis; coenzyme A biosynthesis; CoA from (R)-pantothenate: step 1/5. Its function is as follows. Catalyzes the phosphorylation of pantothenate (Pan), the first step in CoA biosynthesis. This Zymomonas mobilis subsp. mobilis (strain ATCC 31821 / ZM4 / CP4) protein is Type III pantothenate kinase.